Consider the following 378-residue polypeptide: Wnt inhibitory factor 1 (378 aa).

The signal sequence occupies residues 1–28; it reads MAFRTPAVQLHLKACVLLLLGGLLEAAY. One can recognise a WIF domain in the interval 36–175; sequence MWIDANQARI…PHNAIFFKTC (140 aa). The N-linked (GlcNAc...) asparagine glycan is linked to asparagine 86. Disulfide bonds link cysteine 138/cysteine 175, cysteine 180/cysteine 190, cysteine 184/cysteine 196, cysteine 212/cysteine 222, cysteine 216/cysteine 228, and cysteine 230/cysteine 239. EGF-like domains lie at 176-205, 208-240, 243-272, 272-304, and 305-336; these read QRAK…FYGV, EKAL…SSCE, NCST…VRCE, ELSK…DLCS, and KAVC…RHCN. N-linked (GlcNAc...) asparagine glycosylation is present at asparagine 243. 9 disulfide bridges follow: cysteine 244/cysteine 254, cysteine 248/cysteine 260, cysteine 262/cysteine 271, cysteine 276/cysteine 286, cysteine 280/cysteine 292, cysteine 294/cysteine 303, cysteine 308/cysteine 318, cysteine 312/cysteine 324, and cysteine 326/cysteine 335. The segment at 343–378 is disordered; the sequence is VSNSQRVSPSKHKSPSVAAAKEAPETSQPSETNYVV. The segment covering 367–378 has biased composition (polar residues); it reads ETSQPSETNYVV.

Highly expressed in unsegmented paraxial mesoderm.

The protein localises to the secreted. Its function is as follows. Binds to WNT proteins and inhibits their activities. May be involved in mesoderm segmentation. The chain is Wnt inhibitory factor 1 (wif1) from Danio rerio (Zebrafish).